Consider the following 347-residue polypeptide: 8-amino-8-demethylriboflavin N,N-dimethyltransferase (347 aa).

Residues Asp-209 and Gly-235–Phe-237 contribute to the S-adenosyl-L-methionine site.

The protein belongs to the class I-like SAM-binding methyltransferase superfamily. Cation-independent O-methyltransferase family. Homodimer.

It carries out the reaction 8-amino-8-demethylriboflavin + 2 S-adenosyl-L-methionine = roseoflavin + 2 S-adenosyl-L-homocysteine + 2 H(+). It participates in antibiotic biosynthesis. Functionally, catalyzes the S-adenosyl methionine-dependent conversion of 8-amino-8-demethyl-D-riboflavin (AF) into 8-methylamino-8-demethyl-D-riboflavin (MAF) and roseoflavin (RoF), the last two steps in the biosynthesis of the antibiotic roseoflavin. The chain is 8-amino-8-demethylriboflavin N,N-dimethyltransferase from Streptomyces davaonensis (strain DSM 101723 / JCM 4913 / KCC S-0913 / 768).